Consider the following 165-residue polypeptide: Ribosome maturation factor RimM (165 aa).

The PRC barrel domain maps to 94 to 165; the sequence is EDEFYIADLT…YVILNYQREA (72 aa).

Belongs to the RimM family. In terms of assembly, binds ribosomal protein uS19.

The protein localises to the cytoplasm. An accessory protein needed during the final step in the assembly of 30S ribosomal subunit, possibly for assembly of the head region. Essential for efficient processing of 16S rRNA. May be needed both before and after RbfA during the maturation of 16S rRNA. It has affinity for free ribosomal 30S subunits but not for 70S ribosomes. The protein is Ribosome maturation factor RimM of Rickettsia rickettsii (strain Iowa).